The primary structure comprises 241 residues: Sensory transduction protein LytT (241 aa).

The Response regulatory domain maps to 3–117 (RVLIVDDEML…RIQQTLKKYK (115 aa)). Residue Asp54 is modified to 4-aspartylphosphate. Residues 137-241 (LALSVGESIV…AKELKKLLHI (105 aa)) form the HTH LytTR-type domain.

Post-translationally, phosphorylated by LytS.

The protein resides in the cytoplasm. In terms of biological role, member of the two-component regulatory system LytS/LytT that probably regulates genes involved in cell wall metabolism. The sequence is that of Sensory transduction protein LytT (lytT) from Bacillus subtilis (strain 168).